Here is a 633-residue protein sequence, read N- to C-terminus: 1-deoxy-D-xylulose-5-phosphate synthase (633 aa).

Thiamine diphosphate contacts are provided by residues His74 and 115 to 117; that span reads GHA. Mg(2+) is bound at residue Asp146. Thiamine diphosphate is bound by residues 147–148, Asn175, Tyr286, and Glu363; that span reads GA. A Mg(2+)-binding site is contributed by Asn175.

Belongs to the transketolase family. DXPS subfamily. Homodimer. Mg(2+) serves as cofactor. Thiamine diphosphate is required as a cofactor.

It carries out the reaction D-glyceraldehyde 3-phosphate + pyruvate + H(+) = 1-deoxy-D-xylulose 5-phosphate + CO2. Its pathway is metabolic intermediate biosynthesis; 1-deoxy-D-xylulose 5-phosphate biosynthesis; 1-deoxy-D-xylulose 5-phosphate from D-glyceraldehyde 3-phosphate and pyruvate: step 1/1. Functionally, catalyzes the acyloin condensation reaction between C atoms 2 and 3 of pyruvate and glyceraldehyde 3-phosphate to yield 1-deoxy-D-xylulose-5-phosphate (DXP). In Dehalococcoides mccartyi (strain ATCC BAA-2100 / JCM 16839 / KCTC 5957 / BAV1), this protein is 1-deoxy-D-xylulose-5-phosphate synthase.